We begin with the raw amino-acid sequence, 151 residues long: Ribosome maturation factor RimP (151 aa).

Belongs to the RimP family.

The protein resides in the cytoplasm. Required for maturation of 30S ribosomal subunits. This chain is Ribosome maturation factor RimP, found in Haemophilus influenzae (strain PittGG).